The sequence spans 106 residues: ATP-dependent Clp protease adapter protein ClpS (106 aa).

This sequence belongs to the ClpS family. In terms of assembly, binds to the N-terminal domain of the chaperone ClpA.

Its function is as follows. Involved in the modulation of the specificity of the ClpAP-mediated ATP-dependent protein degradation. This is ATP-dependent Clp protease adapter protein ClpS from Yersinia pestis bv. Antiqua (strain Antiqua).